Reading from the N-terminus, the 902-residue chain is Protein NrfI (902 aa).

The next 10 membrane-spanning stretches (helical) occupy residues Tyr9–Ile29, Phe75–Gly95, Val300–Thr320, Leu335–Ser355, Leu602–Ala622, Asp659–Phe679, Ser731–Leu751, Val772–Ala792, Tyr832–Val852, and Leu868–Ala888.

The protein in the C-terminal section; belongs to the CcmF/CycK/Ccl1/NrfE/CcsA family.

It is found in the cell membrane. Its function is as follows. May play a role in cytochrome c biogenesis and may be required for maturation of the NrfA protein. This is Protein NrfI (nrfI) from Wolinella succinogenes (strain ATCC 29543 / DSM 1740 / CCUG 13145 / JCM 31913 / LMG 7466 / NCTC 11488 / FDC 602W) (Vibrio succinogenes).